We begin with the raw amino-acid sequence, 113 residues long: UPF0122 protein Sez_1013 (113 aa).

This sequence belongs to the UPF0122 family.

Functionally, might take part in the signal recognition particle (SRP) pathway. This is inferred from the conservation of its genetic proximity to ftsY/ffh. May be a regulatory protein. The sequence is that of UPF0122 protein Sez_1013 from Streptococcus equi subsp. zooepidemicus (strain MGCS10565).